A 129-amino-acid chain; its full sequence is Small ribosomal subunit protein uS11 (129 aa).

It belongs to the universal ribosomal protein uS11 family. As to quaternary structure, part of the 30S ribosomal subunit. Interacts with proteins S7 and S18. Binds to IF-3.

In terms of biological role, located on the platform of the 30S subunit, it bridges several disparate RNA helices of the 16S rRNA. Forms part of the Shine-Dalgarno cleft in the 70S ribosome. This is Small ribosomal subunit protein uS11 from Bartonella tribocorum (strain CIP 105476 / IBS 506).